The following is a 291-amino-acid chain: ATP synthase gamma chain (291 aa).

This sequence belongs to the ATPase gamma chain family. In terms of assembly, F-type ATPases have 2 components, CF(1) - the catalytic core - and CF(0) - the membrane proton channel. CF(1) has five subunits: alpha(3), beta(3), gamma(1), delta(1), epsilon(1). CF(0) has three main subunits: a, b and c.

It localises to the cell membrane. In terms of biological role, produces ATP from ADP in the presence of a proton gradient across the membrane. The gamma chain is believed to be important in regulating ATPase activity and the flow of protons through the CF(0) complex. This Streptococcus pyogenes serotype M49 (strain NZ131) protein is ATP synthase gamma chain.